The primary structure comprises 307 residues: Glutaminase (307 aa).

Residues S67, N117, E161, N168, Y192, Y243, and V261 each coordinate substrate.

This sequence belongs to the glutaminase family. As to quaternary structure, homotetramer.

The catalysed reaction is L-glutamine + H2O = L-glutamate + NH4(+). The chain is Glutaminase from Streptomyces coelicolor (strain ATCC BAA-471 / A3(2) / M145).